A 62-amino-acid polypeptide reads, in one-letter code: Small ribosomal subunit protein bS21 (62 aa).

Residues 43–52 (VKKKLKSEAA) are compositionally biased toward basic and acidic residues. The interval 43–62 (VKKKLKSEAARKRKAKKKRF) is disordered. The segment covering 53-62 (RKRKAKKKRF) has biased composition (basic residues).

The protein belongs to the bacterial ribosomal protein bS21 family.

This Levilactobacillus brevis (strain ATCC 367 / BCRC 12310 / CIP 105137 / JCM 1170 / LMG 11437 / NCIMB 947 / NCTC 947) (Lactobacillus brevis) protein is Small ribosomal subunit protein bS21.